The primary structure comprises 89 residues: Phytosulfokines 1 (89 aa).

The signal sequence occupies residues 1-22 (MVNPGRTARALCLLCLALLLLG). Residues 23-79 (QDTHSRKLLLQEKHSHGVGNGTTTTQEPSRENGGSTGSNNNGQLQFDSAKWEEFHTD) constitute a propeptide that is removed on maturation. The disordered stretch occupies residues 33–68 (QEKHSHGVGNGTTTTQEPSRENGGSTGSNNNGQLQF). Asn42 carries N-linked (GlcNAc...) asparagine glycosylation. Tyr80 and Tyr82 each carry sulfotyrosine. Residues 85-89 (DVKNP) constitute a propeptide that is removed on maturation.

This sequence belongs to the phytosulfokine family. Sulfation is important for activity and for the binding to a putative membrane receptor. Post-translationally, PSK-alpha is produced by endopeptidase digestion. PSK-beta is produced from PSK-alpha by exopeptidase digestion. Expressed throughout the seedling. More abundant in fragments containing shoot or root apexes where cells proliferate vigorously.

It is found in the secreted. Promotes plant cell differentiation, organogenesis and somatic embryogenesis as well as cell proliferation. The protein is Phytosulfokines 1 (PSK1) of Oryza sativa subsp. indica (Rice).